Consider the following 355-residue polypeptide: Uroporphyrinogen decarboxylase (355 aa).

Substrate-binding positions include R27–R31, D78, Y155, S210, and H328.

It belongs to the uroporphyrinogen decarboxylase family. In terms of assembly, homodimer.

It localises to the cytoplasm. It catalyses the reaction uroporphyrinogen III + 4 H(+) = coproporphyrinogen III + 4 CO2. It functions in the pathway porphyrin-containing compound metabolism; protoporphyrin-IX biosynthesis; coproporphyrinogen-III from 5-aminolevulinate: step 4/4. Its function is as follows. Catalyzes the decarboxylation of four acetate groups of uroporphyrinogen-III to yield coproporphyrinogen-III. The chain is Uroporphyrinogen decarboxylase from Pseudomonas paraeruginosa (strain DSM 24068 / PA7) (Pseudomonas aeruginosa (strain PA7)).